Here is a 356-residue protein sequence, read N- to C-terminus: C-C chemokine receptor 1-like protein 1 (356 aa).

Residues 1–32 (MEIPAVTEPSYNTVAKNDFMSGFLCFSINVRA) lie on the Extracellular side of the membrane. A helical transmembrane segment spans residues 33-60 (FGITVLTPLYSLVFIIGVIGHVLVVLVL). The Cytoplasmic portion of the chain corresponds to 61–67 (IQHKRLR). A helical transmembrane segment spans residues 68–92 (NMTSIYLFNLAISDLVFLSTLPFWV). The Extracellular portion of the chain corresponds to 93 to 108 (DYIMKGDWIFGNAMCK). Residues C107 and C184 are joined by a disulfide bond. Residues 109 to 130 (FVSGFYYLGLYSDMFFITLLTI) traverse the membrane as a helical segment. The Cytoplasmic portion of the chain corresponds to 131 to 147 (DRYLAVVHVVFALRART). A helical transmembrane segment spans residues 148 to 172 (VTFGIISSIITWVLAALVSIPCLYV). Residues 173–198 (FKSQMEFTYHTCRAILPRKSLIRFLR) are Extracellular-facing. The chain crosses the membrane as a helical span at residues 199 to 224 (FQALTMNILGLILPLLAMIICYTRII). Over 225–240 (NVLHRRPNKKKAKVMR) the chain is Cytoplasmic. The chain crosses the membrane as a helical span at residues 241–265 (LIFVITLLFFLLLAPYYLAAFVSAF). Residues 266-282 (EDVLFTPSCLRSQQVDL) lie on the Extracellular side of the membrane. A helical membrane pass occupies residues 283–306 (SLMITEALAYTHCCVNPVIYVFVG). Residues 307-356 (KRFRKYLWQLFRRHTAITLPQWLPFLSVDRAQRASATPPSTVEIETSADL) lie on the Cytoplasmic side of the membrane.

It belongs to the G-protein coupled receptor 1 family. Detected in the spleen, liver and leukocytes.

It is found in the cell membrane. Its function is as follows. Probable receptor for a C-C type chemokine. This Mus musculus (Mouse) protein is C-C chemokine receptor 1-like protein 1 (Ccr1l1).